Reading from the N-terminus, the 90-residue chain is Acylphosphatase (90 aa).

The Acylphosphatase-like domain occupies 4 to 90 (CVRVRVSGRV…KGHDDFKIIY (87 aa)). Active-site residues include Arg19 and Asn37.

The protein belongs to the acylphosphatase family.

It catalyses the reaction an acyl phosphate + H2O = a carboxylate + phosphate + H(+). In Methanothrix thermoacetophila (strain DSM 6194 / JCM 14653 / NBRC 101360 / PT) (Methanosaeta thermophila), this protein is Acylphosphatase (acyP).